Here is a 120-residue protein sequence, read N- to C-terminus: UPF0102 protein NT01CX_2205 (120 aa).

The protein belongs to the UPF0102 family.

This chain is UPF0102 protein NT01CX_2205, found in Clostridium novyi (strain NT).